The sequence spans 236 residues: Ubiquinone biosynthesis O-methyltransferase (236 aa).

Arginine 39, glycine 59, aspartate 80, and methionine 124 together coordinate S-adenosyl-L-methionine.

The protein belongs to the methyltransferase superfamily. UbiG/COQ3 family.

The enzyme catalyses a 3-demethylubiquinol + S-adenosyl-L-methionine = a ubiquinol + S-adenosyl-L-homocysteine + H(+). It carries out the reaction a 3-(all-trans-polyprenyl)benzene-1,2-diol + S-adenosyl-L-methionine = a 2-methoxy-6-(all-trans-polyprenyl)phenol + S-adenosyl-L-homocysteine + H(+). Its pathway is cofactor biosynthesis; ubiquinone biosynthesis. In terms of biological role, O-methyltransferase that catalyzes the 2 O-methylation steps in the ubiquinone biosynthetic pathway. The polypeptide is Ubiquinone biosynthesis O-methyltransferase (Shewanella sp. (strain ANA-3)).